The sequence spans 81 residues: Cortexin-2 (81 aa).

The chain crosses the membrane as a helical span at residues 29-49; that stretch reads TGFAFVGILCIFLGLLIIRCF.

Belongs to the cortexin family.

The protein resides in the membrane. This is Cortexin-2 (CTXN2) from Homo sapiens (Human).